Consider the following 142-residue polypeptide: Large ribosomal subunit protein uL23 (142 aa).

Belongs to the universal ribosomal protein uL23 family. Component of the large ribosomal subunit. Mature ribosomes consist of a small (40S) and a large (60S) subunit. The 40S subunit contains about 32 different proteins and 1 molecule of RNA (18S). The 60S subunit contains 45 different proteins and 3 molecules of RNA (25S, 5.8S and 5S).

It is found in the cytoplasm. Its function is as follows. Component of the ribosome, a large ribonucleoprotein complex responsible for the synthesis of proteins in the cell. The small ribosomal subunit (SSU) binds messenger RNAs (mRNAs) and translates the encoded message by selecting cognate aminoacyl-transfer RNA (tRNA) molecules. The large subunit (LSU) contains the ribosomal catalytic site termed the peptidyl transferase center (PTC), which catalyzes the formation of peptide bonds, thereby polymerizing the amino acids delivered by tRNAs into a polypeptide chain. The nascent polypeptides leave the ribosome through a tunnel in the LSU and interact with protein factors that function in enzymatic processing, targeting, and the membrane insertion of nascent chains at the exit of the ribosomal tunnel. RPL25 is a major component of the universal docking site for these factors at the polypeptide exit tunnel. The chain is Large ribosomal subunit protein uL23 from Candida albicans (strain SC5314 / ATCC MYA-2876) (Yeast).